We begin with the raw amino-acid sequence, 2111 residues long: Glutamate synthase [NADH] (2111 aa).

Residue Cys-69 is the Nucleophile of the active site. One can recognise a Glutamine amidotransferase type-2 domain in the interval 69–469 (CGVGFTCHIK…PGRMLLVDTK (401 aa)). The interval 969-990 (GGKSNTGEGGEDPARSQRLANG) is disordered. 1139 to 1191 (VAETHQTLVLNDLRGRVVIQTDGQIRTGRDVAIACLLGAEEWGFATTPLIALG) provides a ligand contact to FMN. [3Fe-4S] cluster is bound by residues Cys-1192, Cys-1198, and Cys-1203.

Belongs to the glutamate synthase family. As to quaternary structure, homotrimer. It depends on [3Fe-4S] cluster as a cofactor. The cofactor is FAD. FMN is required as a cofactor.

The protein resides in the cytoplasm. It carries out the reaction 2 L-glutamate + NAD(+) = L-glutamine + 2-oxoglutarate + NADH + H(+). Its pathway is amino-acid biosynthesis; L-glutamate biosynthesis via GLT pathway; L-glutamate from 2-oxoglutarate and L-glutamine (NAD(+) route): step 1/1. The protein operates within energy metabolism; nitrogen metabolism. With respect to regulation, in the presence of 10 mM allantoin, the activity is reduced more than 25%. Forms L-glutamate from L-glutamine and 2-oxoglutarate. Represents an alternative pathway to L-glutamate dehydrogenase for the biosynthesis of L-glutamate. Participates with glutamine synthetase in ammonia assimilation processes. The enzyme is specific for NADH, L-glutamine and 2-oxoglutarate. This chain is Glutamate synthase [NADH] (glt1), found in Schizosaccharomyces pombe (strain 972 / ATCC 24843) (Fission yeast).